Consider the following 120-residue polypeptide: Large ribosomal subunit protein uL18 (120 aa).

It belongs to the universal ribosomal protein uL18 family. Part of the 50S ribosomal subunit; part of the 5S rRNA/L5/L18/L25 subcomplex. Contacts the 5S and 23S rRNAs.

In terms of biological role, this is one of the proteins that bind and probably mediate the attachment of the 5S RNA into the large ribosomal subunit, where it forms part of the central protuberance. The chain is Large ribosomal subunit protein uL18 from Bordetella bronchiseptica (strain ATCC BAA-588 / NCTC 13252 / RB50) (Alcaligenes bronchisepticus).